A 141-amino-acid chain; its full sequence is Putative nickel-responsive regulator (141 aa).

Positions 80, 91, 93, and 99 each coordinate Ni(2+).

The protein belongs to the transcriptional regulatory CopG/NikR family. Requires Ni(2+) as cofactor.

Transcriptional regulator. The sequence is that of Putative nickel-responsive regulator from Methanococcus maripaludis (strain C6 / ATCC BAA-1332).